A 345-amino-acid polypeptide reads, in one-letter code: Molybdopterin synthase catalytic subunit (345 aa).

Residues 101-102 (HR), K117, and 124-126 (KKE) contribute to the substrate site.

The protein belongs to the MoaE family. MOCS2B subfamily. As to quaternary structure, heterotetramer; composed of 2 small (Mocs2A) and 2 large (Mocs2B) subunits.

The protein localises to the cytoplasm. The enzyme catalyses 2 [molybdopterin-synthase sulfur-carrier protein]-C-terminal-Gly-aminoethanethioate + cyclic pyranopterin phosphate + H2O = molybdopterin + 2 [molybdopterin-synthase sulfur-carrier protein]-C-terminal Gly-Gly + 2 H(+). It functions in the pathway cofactor biosynthesis; molybdopterin biosynthesis. Catalytic subunit of the molybdopterin synthase complex, a complex that catalyzes the conversion of precursor Z into molybdopterin. Acts by mediating the incorporation of 2 sulfur atoms from thiocarboxylated Mocs2A into precursor Z to generate a dithiolene group. This Drosophila virilis (Fruit fly) protein is Molybdopterin synthase catalytic subunit.